Reading from the N-terminus, the 172-residue chain is Cytidylate kinase (172 aa).

7-15 (GLAGTGTTT) serves as a coordination point for ATP.

It belongs to the cytidylate kinase family. Type 2 subfamily.

It is found in the cytoplasm. It carries out the reaction CMP + ATP = CDP + ADP. It catalyses the reaction dCMP + ATP = dCDP + ADP. The protein is Cytidylate kinase of Methanobrevibacter smithii (strain ATCC 35061 / DSM 861 / OCM 144 / PS).